The chain runs to 919 residues: Probable glucan 1,3-alpha-glucosidase (919 aa).

Residues 1–28 form the signal peptide; the sequence is MDPPPRPRPHRVAVLLLLLLASSPAARA. Aspartate 510 serves as the catalytic Nucleophile. Glutamate 513 is an active-site residue. Residue aspartate 586 is the Proton donor of the active site. N-linked (GlcNAc...) asparagine glycosylation is present at asparagine 802.

Belongs to the glycosyl hydrolase 31 family. Heterodimer of a catalytic alpha subunit and a beta subunit.

Its subcellular location is the endoplasmic reticulum. The catalysed reaction is N(4)-(alpha-D-Glc-(1-&gt;3)-alpha-D-Man-(1-&gt;2)-alpha-D-Man-(1-&gt;2)-alpha-D-Man-(1-&gt;3)-[alpha-D-Man-(1-&gt;2)-alpha-D-Man-(1-&gt;3)-[alpha-D-Man-(1-&gt;2)-alpha-D-Man-(1-&gt;6)]-alpha-D-Man-(1-&gt;6)]-beta-D-Man-(1-&gt;4)-beta-D-GlcNAc-(1-&gt;4)-beta-D-GlcNAc)-L-asparaginyl-[protein] + H2O = N(4)-(alpha-D-Man-(1-&gt;2)-alpha-D-Man-(1-&gt;2)-alpha-D-Man-(1-&gt;3)-[alpha-D-Man-(1-&gt;2)-alpha-D-Man-(1-&gt;3)-[alpha-D-Man-(1-&gt;2)-alpha-D-Man-(1-&gt;6)]-alpha-D-Man-(1-&gt;6)]-beta-D-Man-(1-&gt;4)-beta-D-GlcNAc-(1-&gt;4)-beta-D-GlcNAc)-L-asparaginyl-[protein] (N-glucan mannose isomer 9A1,2,3B1,2,3) + beta-D-glucose. It catalyses the reaction N(4)-(alpha-D-Glc-(1-&gt;3)-alpha-D-Glc-(1-&gt;3)-alpha-D-Man-(1-&gt;2)-alpha-D-Man-(1-&gt;2)-alpha-D-Man-(1-&gt;3)-[alpha-D-Man-(1-&gt;2)-alpha-D-Man-(1-&gt;3)-[alpha-D-Man-(1-&gt;2)-alpha-D-Man-(1-&gt;6)]-alpha-D-Man-(1-&gt;6)]-beta-D-Man-(1-&gt;4)-beta-D-GlcNAc-(1-&gt;4)-beta-D-GlcNAc)-L-asparaginyl-[protein] + H2O = N(4)-(alpha-D-Glc-(1-&gt;3)-alpha-D-Man-(1-&gt;2)-alpha-D-Man-(1-&gt;2)-alpha-D-Man-(1-&gt;3)-[alpha-D-Man-(1-&gt;2)-alpha-D-Man-(1-&gt;3)-[alpha-D-Man-(1-&gt;2)-alpha-D-Man-(1-&gt;6)]-alpha-D-Man-(1-&gt;6)]-beta-D-Man-(1-&gt;4)-beta-D-GlcNAc-(1-&gt;4)-beta-D-GlcNAc)-L-asparaginyl-[protein] + beta-D-glucose. The protein operates within glycan metabolism; N-glycan metabolism. In terms of biological role, cleaves sequentially the 2 innermost alpha-1,3-linked glucose residues from the Glc(2)Man(9)GlcNAc(2) oligosaccharide precursor of immature glycoproteins. May be required for defense response elicited by pathogen-associated molecular patterns (PAMPs). The polypeptide is Probable glucan 1,3-alpha-glucosidase (Oryza sativa subsp. japonica (Rice)).